Consider the following 256-residue polypeptide: Flap endonuclease Xni (256 aa).

Aspartate 105 is a binding site for Mg(2+). The 5'-3' exonuclease domain occupies 164 to 250 (SQFIDFLAMA…LNTRLANFRV (87 aa)). Methionine 172, alanine 173, proline 181, isoleucine 183, and isoleucine 186 together coordinate K(+). An interaction with DNA region spans residues 185–190 (GIGPKS).

This sequence belongs to the Xni family. Requires Mg(2+) as cofactor. The cofactor is K(+).

Its function is as follows. Has flap endonuclease activity. During DNA replication, flap endonucleases cleave the 5'-overhanging flap structure that is generated by displacement synthesis when DNA polymerase encounters the 5'-end of a downstream Okazaki fragment. The chain is Flap endonuclease Xni from Shewanella loihica (strain ATCC BAA-1088 / PV-4).